A 521-amino-acid chain; its full sequence is AAA ATPase forming ring-shaped complexes (521 aa).

A coiled-coil region spans residues 4–44; it reads TEDLAALNDRLMAKNHALAEALSRAGKELTKAKSQLAQLAQ. 235 to 240 is a binding site for ATP; it reads GNGKTM.

This sequence belongs to the AAA ATPase family. In terms of assembly, homohexamer. Assembles into a hexameric ring structure.

The sequence is that of AAA ATPase forming ring-shaped complexes from Bifidobacterium longum (strain DJO10A).